The following is a 372-amino-acid chain: Cytoplasmic tRNA 2-thiolation protein 1 (372 aa).

Residues 335 to 372 (GKKEDGGCGSGGGGCGCAGAADETENEETRKRLKDLQF) are disordered. Residues 341–351 (GCGSGGGGCGC) show a composition bias toward gly residues. Residues 361–372 (EETRKRLKDLQF) are compositionally biased toward basic and acidic residues.

This sequence belongs to the TtcA family. CTU1/NCS6/ATPBD3 subfamily.

The protein resides in the cytoplasm. It participates in tRNA modification; 5-methoxycarbonylmethyl-2-thiouridine-tRNA biosynthesis. Functionally, plays a central role in 2-thiolation of mcm(5)S(2)U at tRNA wobble positions of tRNA(Lys), tRNA(Glu) and tRNA(Gln). Directly binds tRNAs and probably acts by catalyzing adenylation of tRNAs, an intermediate required for 2-thiolation. It is unclear whether it acts as a sulfurtransferase that transfers sulfur from thiocarboxylated URM1 onto the uridine of tRNAs at wobble position. The sequence is that of Cytoplasmic tRNA 2-thiolation protein 1 from Caenorhabditis briggsae.